The sequence spans 26 residues: Melittin (26 aa).

Glycine 1 carries the N-formylglycine; partial modification. Glutamate 26 bears the Glutamic acid 1-amide mark.

It belongs to the melittin family. In terms of assembly, monomer (in solution and for integration into membranes), homotetramer (in solution and potentially as a toroidal pore in membranes), and potenially homomultimer (as a toroidal pore in membranes). As to expression, expressed by the venom gland.

Its subcellular location is the secreted. The protein localises to the target cell membrane. Functionally, main toxin of bee venom with strong hemolytic activity and antimicrobial activity. It has enhancing effects on bee venom phospholipase A2 activity. This amphipathic toxin binds to negatively charged membrane surface and forms pore by inserting into lipid bilayers inducing the leakage of ions and molecules and the enhancement of permeability that ultimately leads to cell lysis. It acts as a voltage-gated pore with higher selectivity for anions over cations. The ion conductance has been shown to be voltage-dependent. Self-association of melittin in membranes is promoted by high ionic strength, but not by the presence of negatively charged lipids. In vivo, intradermal injection into healthy human volunteers produce sharp pain sensation and an inflammatory response. It produces pain by activating primary nociceptor cells directly and indirectly due to its ability to activate plasma membrane phospholipase A2 and its pore-forming activity. This is Melittin (MELT) from Apis dorsata (Giant honeybee).